Reading from the N-terminus, the 361-residue chain is PTI1-like tyrosine-protein kinase At3g15890 (361 aa).

The region spanning 39–328 (FNYDNKLGEG…ISELEANPLF (290 aa)) is the Protein kinase domain. ATP is bound by residues 45–53 (LGEGRFGSV) and Lys67. Asp165 (proton acceptor) is an active-site residue. Disordered stretches follow at residues 195-219 (TGDGATKAKSNNGYISPECDASGKE) and 323-361 (EANPLFKNPYSSNENNREHVAEESSDVILEDKDHQQQQE). A compositionally biased stretch (basic and acidic residues) spans 351 to 361 (LEDKDHQQQQE).

This sequence belongs to the protein kinase superfamily. Tyr protein kinase family.

The enzyme catalyses L-tyrosyl-[protein] + ATP = O-phospho-L-tyrosyl-[protein] + ADP + H(+). The sequence is that of PTI1-like tyrosine-protein kinase At3g15890 from Arabidopsis thaliana (Mouse-ear cress).